Reading from the N-terminus, the 118-residue chain is Small ribosomal subunit protein bS6 (118 aa).

This sequence belongs to the bacterial ribosomal protein bS6 family.

Binds together with bS18 to 16S ribosomal RNA. This Parabacteroides distasonis (strain ATCC 8503 / DSM 20701 / CIP 104284 / JCM 5825 / NCTC 11152) protein is Small ribosomal subunit protein bS6.